Reading from the N-terminus, the 684-residue chain is Methionine--tRNA ligase (684 aa).

A 'HIGH' region motif is present at residues 15–25; the sequence is PYANGAIHLGH. Zn(2+) is bound by residues Cys-146, Cys-149, Cys-159, and Cys-162. The 'KMSKS' region signature appears at 331 to 335; sequence KMSKS. Lys-334 contributes to the ATP binding site. Positions 582–684 constitute a tRNA-binding domain; sequence DFAKLDLRVA…SGVTAGMQVR (103 aa).

Belongs to the class-I aminoacyl-tRNA synthetase family. MetG type 1 subfamily. As to quaternary structure, homodimer. It depends on Zn(2+) as a cofactor.

It is found in the cytoplasm. The enzyme catalyses tRNA(Met) + L-methionine + ATP = L-methionyl-tRNA(Met) + AMP + diphosphate. Its function is as follows. Is required not only for elongation of protein synthesis but also for the initiation of all mRNA translation through initiator tRNA(fMet) aminoacylation. The sequence is that of Methionine--tRNA ligase from Glaesserella parasuis serovar 5 (strain SH0165) (Haemophilus parasuis).